The sequence spans 306 residues: Ribonuclease Z (306 aa).

Positions 63, 65, 67, 68, 142, 213, and 271 each coordinate Zn(2+). Aspartate 67 serves as the catalytic Proton acceptor.

This sequence belongs to the RNase Z family. Homodimer. Requires Zn(2+) as cofactor.

The enzyme catalyses Endonucleolytic cleavage of RNA, removing extra 3' nucleotides from tRNA precursor, generating 3' termini of tRNAs. A 3'-hydroxy group is left at the tRNA terminus and a 5'-phosphoryl group is left at the trailer molecule.. In terms of biological role, zinc phosphodiesterase, which displays some tRNA 3'-processing endonuclease activity. Probably involved in tRNA maturation, by removing a 3'-trailer from precursor tRNA. The sequence is that of Ribonuclease Z from Oceanobacillus iheyensis (strain DSM 14371 / CIP 107618 / JCM 11309 / KCTC 3954 / HTE831).